We begin with the raw amino-acid sequence, 91 residues long: Thioredoxin (91 aa).

Residues 2-91 form the Thioredoxin domain; the sequence is SDSIVHVTDD…SRQSEVEATK (90 aa). An intrachain disulfide couples Cys-33 to Cys-36.

This sequence belongs to the thioredoxin family.

Its function is as follows. Participates in various redox reactions through the reversible oxidation of its active center dithiol to a disulfide and catalyzes dithiol-disulfide exchange reactions. The protein is Thioredoxin (trxA) of Thiocapsa roseopersicina.